We begin with the raw amino-acid sequence, 175 residues long: Catabolic 3-dehydroquinase (175 aa).

Tyrosine 26 (proton acceptor) is an active-site residue. 3 residues coordinate substrate: asparagine 104, histidine 110, and aspartate 117. Histidine 130 acts as the Proton donor in catalysis. Residues 131–132 and arginine 141 each bind substrate; that span reads VS.

This sequence belongs to the type-II 3-dehydroquinase family. As to quaternary structure, homododecamer. Adopts a ring-like structure, composed of an arrangement of two hexameric rings stacked on top of one another.

The enzyme catalyses 3-dehydroquinate = 3-dehydroshikimate + H2O. The protein operates within aromatic compound metabolism; 3,4-dihydroxybenzoate biosynthesis; 3,4-dihydroxybenzoate from 3-dehydroquinate: step 1/2. Functionally, is involved in the catabolism of quinate. Allows the utilization of quinate as carbon source via the beta-ketoadipate pathway. This Sordaria macrospora (strain ATCC MYA-333 / DSM 997 / K(L3346) / K-hell) protein is Catabolic 3-dehydroquinase.